Reading from the N-terminus, the 141-residue chain is Transcription antitermination protein NusB (141 aa).

Belongs to the NusB family.

In terms of biological role, involved in transcription antitermination. Required for transcription of ribosomal RNA (rRNA) genes. Binds specifically to the boxA antiterminator sequence of the ribosomal RNA (rrn) operons. The chain is Transcription antitermination protein NusB from Neisseria meningitidis serogroup A / serotype 4A (strain DSM 15465 / Z2491).